We begin with the raw amino-acid sequence, 484 residues long: uncharacterized protein (484 aa).

Residues 47–226 (TLPIPAAVVK…TEVTVKIFKF (180 aa)) enclose the FAD-binding PCMH-type domain.

The protein belongs to the FAD-binding oxidoreductase/transferase type 4 family.

This is an uncharacterized protein from Escherichia coli O157:H7.